Consider the following 705-residue polypeptide: Translation initiation factor IF-2 (705 aa).

Residues 40-124 (DDQIKALDKK…QPAAPKEIPS (85 aa)) form a disordered region. Residues 41–58 (DQIKALDKKFKKEQKNDN) are compositionally biased toward basic and acidic residues. Positions 59–77 (KQSTQNNHQKSNNQNQNKG) are enriched in low complexity. A compositionally biased stretch (basic residues) spans 94-108 (KGNKKNNRNNKKNNK). One can recognise a tr-type G domain in the interval 207-376 (ERPAVVTIMG…GLVAEVQELK (170 aa)). The segment at 216–223 (GHVDHGKT) is G1. GTP is bound at residue 216–223 (GHVDHGKT). Positions 241–245 (GITQH) are G2. A G3 region spans residues 262–265 (DTPG). GTP contacts are provided by residues 262–266 (DTPGH) and 316–319 (NKID). The G4 stretch occupies residues 316–319 (NKID). A G5 region spans residues 352–354 (SAL).

Belongs to the TRAFAC class translation factor GTPase superfamily. Classic translation factor GTPase family. IF-2 subfamily.

The protein localises to the cytoplasm. Its function is as follows. One of the essential components for the initiation of protein synthesis. Protects formylmethionyl-tRNA from spontaneous hydrolysis and promotes its binding to the 30S ribosomal subunits. Also involved in the hydrolysis of GTP during the formation of the 70S ribosomal complex. In Staphylococcus aureus (strain MSSA476), this protein is Translation initiation factor IF-2.